Consider the following 617-residue polypeptide: MKGTFFHNQRFLCFSILFMWIKTYVIYKLGFDLQIDTLLEELMLLVNPLSFILPLFGIGLFLKENKQRAFLLIANLVLTVILISNTIFYGFYIDFITIPVLFQASNMSDMGSSVKELFHPLFIALFVDLVFLLLFARKTKHPQTKAAPHTIKRYYAASCGMLLCTLALAEVQQPKLLAHSFDREMLVKSIGLFQFHIYDTISQTVNISAKAFADEDSITAIKNYTEADYSKPDQSKFGLAKGRNVIFVTLESTQSFVLNEKVNGKEITPFMNDLIKKSYSFDHFYQQTEQGKTSDSEFIVANSLYPSLSGAVFFTKSDHQFHTMYKSLKQHDYYSAVFHANHKTFWNRDVMYDTFGIDRFFDVDDFHVTPGTSTSWGLKDKEFLEQSAKKLKSLPQPFYSSFITLTNHFPFEIDEKDQLIDEFDSSSDLLNRYVTTVRYEDEALKHFIKKLKDEGLYENSMIVFMGDHYGISEAHNEAMAEFLGKDEITPYDNVQLQRVPFIIHIPGITDQQPETIPDAGGQVDVRPTLMHLLGVETKGDIQFGNDLLSGDRTPFAVLRNGSFITNDYVYTKNTCYSQKTGEVLEDQDACLPYKEKANEELSLSDKILNGDLLRFSE.

The Cytoplasmic portion of the chain corresponds to 1-10 (MKGTFFHNQR). A helical transmembrane segment spans residues 11–31 (FLCFSILFMWIKTYVIYKLGF). The Extracellular segment spans residues 32–41 (DLQIDTLLEE). Residues 42-62 (LMLLVNPLSFILPLFGIGLFL) traverse the membrane as a helical segment. Topologically, residues 63–68 (KENKQR) are cytoplasmic. Residues 69 to 89 (AFLLIANLVLTVILISNTIFY) traverse the membrane as a helical segment. The Extracellular portion of the chain corresponds to 90 to 115 (GFYIDFITIPVLFQASNMSDMGSSVK). The helical transmembrane segment at 116 to 136 (ELFHPLFIALFVDLVFLLLFA) threads the bilayer. Residues 137–153 (RKTKHPQTKAAPHTIKR) lie on the Cytoplasmic side of the membrane. Residues 154 to 171 (YYAASCGMLLCTLALAEV) form a helical membrane-spanning segment. The Extracellular segment spans residues 172 to 617 (QQPKLLAHSF…LNGDLLRFSE (446 aa)). Residues Glu-251 and Thr-293 each coordinate Mn(2+). Residue Thr-293 is part of the active site. His-408 lines the substrate pocket. Residues Asp-467 and His-468 each contribute to the Mn(2+) site.

The protein belongs to the LTA synthase family. In terms of processing, proteolytically cleaved.

It localises to the cell membrane. The protein localises to the secreted. The protein is Lipoteichoic acid synthase-like YvgJ (yvgJ) of Bacillus subtilis (strain 168).